The chain runs to 355 residues: Vacuolar protein sorting-associated protein 37C (355 aa).

Residue S29 is modified to Phosphoserine. Positions 78–167 (VERCQEQKAK…RKPRASQELA (90 aa)) constitute a VPS37 C-terminal domain. The disordered stretch occupies residues 159–355 (KPRASQELAG…PPPGPAWPGY (197 aa)). Composition is skewed to pro residues over residues 170–186 (APPPRPPPPVRPVPQGT) and 194–205 (PQPPSAMPPYPL). Residues 246–257 (PAAQPGPRGAAG) show a composition bias toward low complexity. Residues 321–355 (PGQPQPSVPLQPPYPPGPAPPYGFPPPPGPAWPGY) show a composition bias toward pro residues.

It belongs to the VPS37 family. Component of the ESCRT-I complex (endosomal sorting complex required for transport I) which consists of TSG101, VPS28, a VPS37 protein (VPS37A to -D) and MVB12A or MVB12B in a 1:1:1:1 stoichiometry. Interacts with TSG101, VPS28, MVB12A and MVB12B. Component of the ESCRT-I complex (endosomal sorting complex required for transport I) which consists of TSG101, VPS28, a VPS37 protein (VPS37A to -D) and UBAP1 in a 1:1:1:1 stoichiometry. Interacts with HGS and STAM2. Interacts with CEP55. In terms of processing, phosphorylated by TBK1.

Its subcellular location is the late endosome membrane. In terms of biological role, component of the ESCRT-I complex, a regulator of vesicular trafficking process. Required for the sorting of endocytic ubiquitinated cargos into multivesicular bodies. May be involved in cell growth and differentiation. This is Vacuolar protein sorting-associated protein 37C (VPS37C) from Pongo abelii (Sumatran orangutan).